The primary structure comprises 722 residues: Glycine--tRNA ligase beta subunit (722 aa).

This sequence belongs to the class-II aminoacyl-tRNA synthetase family. Tetramer of two alpha and two beta subunits.

The protein resides in the cytoplasm. The enzyme catalyses tRNA(Gly) + glycine + ATP = glycyl-tRNA(Gly) + AMP + diphosphate. The polypeptide is Glycine--tRNA ligase beta subunit (Haemophilus influenzae (strain 86-028NP)).